The sequence spans 316 residues: Beta-ketoacyl-[acyl-carrier-protein] synthase III (316 aa).

Active-site residues include cysteine 112 and histidine 243. Residues 244 to 248 (QANIR) are ACP-binding. Asparagine 273 is a catalytic residue.

The protein belongs to the thiolase-like superfamily. FabH family. In terms of assembly, homodimer.

The protein localises to the cytoplasm. The enzyme catalyses malonyl-[ACP] + acetyl-CoA + H(+) = 3-oxobutanoyl-[ACP] + CO2 + CoA. Its pathway is lipid metabolism; fatty acid biosynthesis. Functionally, catalyzes the condensation reaction of fatty acid synthesis by the addition to an acyl acceptor of two carbons from malonyl-ACP. Catalyzes the first condensation reaction which initiates fatty acid synthesis and may therefore play a role in governing the total rate of fatty acid production. Possesses both acetoacetyl-ACP synthase and acetyl transacylase activities. Its substrate specificity determines the biosynthesis of branched-chain and/or straight-chain of fatty acids. In Actinobacillus pleuropneumoniae serotype 5b (strain L20), this protein is Beta-ketoacyl-[acyl-carrier-protein] synthase III.